The primary structure comprises 441 residues: Ribosomal protein uS12 methylthiotransferase RimO (441 aa).

Residues proline 8–proline 118 form the MTTase N-terminal domain. Positions 17, 53, 82, 150, 154, and 157 each coordinate [4Fe-4S] cluster. The 238-residue stretch at leucine 136 to glutamate 373 folds into the Radical SAM core domain. Residues glutamine 376–valine 441 enclose the TRAM domain.

This sequence belongs to the methylthiotransferase family. RimO subfamily. [4Fe-4S] cluster is required as a cofactor.

It localises to the cytoplasm. It catalyses the reaction L-aspartate(89)-[ribosomal protein uS12]-hydrogen + (sulfur carrier)-SH + AH2 + 2 S-adenosyl-L-methionine = 3-methylsulfanyl-L-aspartate(89)-[ribosomal protein uS12]-hydrogen + (sulfur carrier)-H + 5'-deoxyadenosine + L-methionine + A + S-adenosyl-L-homocysteine + 2 H(+). Its function is as follows. Catalyzes the methylthiolation of an aspartic acid residue of ribosomal protein uS12. The protein is Ribosomal protein uS12 methylthiotransferase RimO of Escherichia coli (strain SMS-3-5 / SECEC).